The primary structure comprises 93 residues: Large ribosomal subunit protein uL23cz/uL23cy (93 aa).

The protein belongs to the universal ribosomal protein uL23 family. As to quaternary structure, part of the 50S ribosomal subunit.

It localises to the plastid. Its subcellular location is the chloroplast. Its function is as follows. Binds to 23S rRNA. This Atropa belladonna (Belladonna) protein is Large ribosomal subunit protein uL23cz/uL23cy (rpl23-A).